A 772-amino-acid polypeptide reads, in one-letter code: MSHTTITNFLAGVIARPQGGNITSDETFRRYRTIVRTSATIGGNEDSRTTSIFHEIGRAVNTKGKALAVAGMEAPLVEASYPTNAVLVEDFIGLAKKYTNFSATFEYSSLAGVVERLARGLAACSVFEDVTSTDLRGNNPLAVHALATYDGPVNSLTSAVFIPRLVNNALTGDVFAVLCNCVAGEGGTVVTDTIELDANTRQPIVPEVGPLGVPGAIVDALRLLGSNMIASDQGPLFALALTRGIHRVLSVVGHTDEGGIVRDLLRCGGFGLPFGGIHYGLEEYSGLPALQFNSAAATAAYVDGIALVTAAVVAHADPGERYNGEWFPTFFDGTTHADTMRRSGDSTEGTAAMADRNRAQLLARQQLFWRPYITALGACFSTAGDISVAERFQCAASHSLGADPRHLRLPSVAPYFWIEPTGLIPHDFLGSVAEEEGFASYCWRDTTRTRPAWDSIVLSGARDTTFSAYHIRMKGARTAWFLAHWLGHPENGLGATRVRQLDPNAVLHPGPCEGNEQVRDRVEADLPLTDYLWRRGQSPFPAAGELLNLTSEWGILFRHVTFTDDGDLNPEHLPAAHEMADTTVTMTVGRPIGIAPGRSNAGDNQARRARTRASVELSAASRRARVFGRPDVGEMPTLTSAPAPIPASPAYDGNRGGEAGGVTGRGNNRSAAPGHASWSERQADGVPVNVTPHHNALRAPPFPRQQGALGGGGNVPLPPAPGAAPPPPPGPPNGPPAGPPPSDDGSSNPAAPVPTAIHAPPAAAQADRAEGQ.

Residues 593-772 form a disordered region; sequence GIAPGRSNAG…AAQADRAEGQ (180 aa). Residues 654–664 are compositionally biased toward gly residues; sequence NRGGEAGGVTG. The segment covering 716 to 742 has biased composition (pro residues); sequence PLPPAPGAAPPPPPGPPNGPPAGPPPS. Residues 743–766 are compositionally biased toward low complexity; it reads DDGSSNPAAPVPTAIHAPPAAAQA.

The protein belongs to the totivirus major capsid protein family.

It is found in the virion. Its function is as follows. Capsid protein self-assembles to form an icosahedral capsid with a T=2 symmetry, 40 nm in diameter, and consisting of 60 capsid proteins asymmetric dimers. The capsid encapsulates the genomic dsRNA and the polymerase and remains intact following cell entry to protect the dsRNA from degradation and to prevent unfavorable antiviral responses in the host cell during all the replication cycle of the virus. Nascent transcripts are transcribed within the structural confines of the virion and are extruded into the cytoplasm. In terms of biological role, binds and removes 5' cap structures from cellular mRNA. This Helminthosporium victoriae virus-190S (Hv190SV) protein is Major capsid protein.